Here is a 452-residue protein sequence, read N- to C-terminus: Probable glycine dehydrogenase (decarboxylating) subunit 1 (452 aa).

Belongs to the GcvP family. N-terminal subunit subfamily. In terms of assembly, the glycine cleavage system is composed of four proteins: P, T, L and H. In this organism, the P 'protein' is a heterodimer of two subunits.

It catalyses the reaction N(6)-[(R)-lipoyl]-L-lysyl-[glycine-cleavage complex H protein] + glycine + H(+) = N(6)-[(R)-S(8)-aminomethyldihydrolipoyl]-L-lysyl-[glycine-cleavage complex H protein] + CO2. Its function is as follows. The glycine cleavage system catalyzes the degradation of glycine. The P protein binds the alpha-amino group of glycine through its pyridoxal phosphate cofactor; CO(2) is released and the remaining methylamine moiety is then transferred to the lipoamide cofactor of the H protein. In Nitrosospira multiformis (strain ATCC 25196 / NCIMB 11849 / C 71), this protein is Probable glycine dehydrogenase (decarboxylating) subunit 1.